Here is a 276-residue protein sequence, read N- to C-terminus: MTAASTTATTMLQATQSDVLQEIQSNFLLNSSIWVNIALAGVVILLFVAMGRDIESPRAKLIWVATMLVPLVSISSYAGLASGLTVGFLQMPPGHALAGQEVLSPWGRYLTWTFSTPMILLALGLLADTDIASLFTAITMDIGMCVTGLAAALITSSHLLRWVFYGISCAFFVAVLYVLLVQWPADAEAAGTSEIFGTLKILTVVLWLGYPILWALGSEGVALLSVGVTSWGYSGLDILAKYVFAFLLLRWVAANEGAVSGSGMSIGSGGAAPADD.

The propeptide occupies 1 to 21; the sequence is MTAASTTATTMLQATQSDVLQ. The Extracellular segment spans residues 22-25; sequence EIQS. A helical membrane pass occupies residues 26 to 51; sequence NFLLNSSIWVNIALAGVVILLFVAMG. Residues 52 to 57 lie on the Cytoplasmic side of the membrane; that stretch reads RDIESP. A helical membrane pass occupies residues 58-81; it reads RAKLIWVATMLVPLVSISSYAGLA. The Extracellular segment spans residues 82–105; it reads SGLTVGFLQMPPGHALAGQEVLSP. The chain crosses the membrane as a helical span at residues 106–127; that stretch reads WGRYLTWTFSTPMILLALGLLA. Over 128 to 130 the chain is Cytoplasmic; that stretch reads DTD. Residues 131–154 traverse the membrane as a helical segment; that stretch reads IASLFTAITMDIGMCVTGLAAALI. Residues 155-157 are Extracellular-facing; that stretch reads TSS. The chain crosses the membrane as a helical span at residues 158–180; it reads HLLRWVFYGISCAFFVAVLYVLL. Over 181–192 the chain is Cytoplasmic; that stretch reads VQWPADAEAAGT. A helical transmembrane segment spans residues 193–216; the sequence is SEIFGTLKILTVVLWLGYPILWAL. At 217–225 the chain is on the extracellular side; that stretch reads GSEGVALLS. The helical transmembrane segment at 226–254 threads the bilayer; the sequence is VGVTSWGYSGLDILAKYVFAFLLLRWVAA. K241 is subject to N6-(retinylidene)lysine. Residues 255-276 lie on the Cytoplasmic side of the membrane; the sequence is NEGAVSGSGMSIGSGGAAPADD.

The protein belongs to the archaeal/bacterial/fungal opsin family.

The protein localises to the cell membrane. Functionally, light-driven chloride pump. This is Halorhodopsin (hop) from Halobacterium halobium (strain port).